Here is a 676-residue protein sequence, read N- to C-terminus: MLKKPKRKPGRRTYGKSLKIFIPGTLFVHARKGFGFVSPDNPEEYPFDIFVPARDLRGALDGDHVIVSVLPYPRDGQKLKGTISEVLARGKTTLVGTITSLVSPTSALAYTSMSGSQSLIPVELLPGRTYKIGDRILLSTPPWVDKPQEGASPALQMLEFIGHITNAKADFQAIQAEYNLAEEFPPEVIEEASLFSQKHITQVLHSRKDLRDLLCFTIDSSTARDFDDAISLTYDHNNNYILGVHIADVSHYVTPHSHLDKEAAKRCNSTYFPGKVIPMLPSALSDNLCSLKPNVDRLAVSVFMTFTKSGHLSDYQIFRSVIRSKYRMTYDEVDNIIEKKHSHPLSKILNEMATLSKKFSDIREERGCIRFVLPSVTMSLDNLQEPVALIENHQTFSHKLIEEFMLKANEVVAYHISHQGVSLPFRSHEPPNDENLLAFQELAKNMGFDITFTPTQEPDYQYLLQTTSAGHPLEQVLHSQFVRSMKTASYSTENKGHYGLKLDYYTHFTSPIRRYIDLIVHRLLFNPLSIDQTHLEIIVRACSTKERVSAKAENSFENLKKTRFINKFLQEQPKTTYHAYIITANHEGLSFVVTEFCHEGFIAAAELPKEYSLKKNALPESIPDKMKPGASIKVTIDSVNLLTQKIVWSIATTTEDKPKKIKKTPSKKKGTKKRAS.

The 321-residue stretch at 207–527 (RKDLRDLLCF…LIVHRLLFNP (321 aa)) folds into the RNB domain. Residues 566–651 (NKFLQEQPKT…LTQKIVWSIA (86 aa)) form the S1 motif domain. The interval 656-676 (DKPKKIKKTPSKKKGTKKRAS) is disordered. The segment covering 659-676 (KKIKKTPSKKKGTKKRAS) has biased composition (basic residues).

The protein belongs to the RNR ribonuclease family. RNase R subfamily.

It localises to the cytoplasm. The catalysed reaction is Exonucleolytic cleavage in the 3'- to 5'-direction to yield nucleoside 5'-phosphates.. In terms of biological role, 3'-5' exoribonuclease that releases 5'-nucleoside monophosphates and is involved in maturation of structured RNAs. The protein is Ribonuclease R of Chlamydia pneumoniae (Chlamydophila pneumoniae).